Here is a 159-residue protein sequence, read N- to C-terminus: Probable E3 ubiquitin-protein ligase RHA1A (159 aa).

The segment at 86–130 (CTVCLSDFESDDKVRQLPKCGHVFHHYCLDRWIVDYNKMKCPVCR) adopts an RING-type; atypical zinc-finger fold.

Predominantly expressed in stems.

It carries out the reaction S-ubiquitinyl-[E2 ubiquitin-conjugating enzyme]-L-cysteine + [acceptor protein]-L-lysine = [E2 ubiquitin-conjugating enzyme]-L-cysteine + N(6)-ubiquitinyl-[acceptor protein]-L-lysine.. The protein operates within protein modification; protein ubiquitination. Its function is as follows. Probable E3 ubiquitin-protein ligase that may possess E3 ubiquitin ligase activity in vitro. The sequence is that of Probable E3 ubiquitin-protein ligase RHA1A from Arabidopsis thaliana (Mouse-ear cress).